The primary structure comprises 404 residues: Formate-dependent phosphoribosylglycinamide formyltransferase (404 aa).

Residues 25–26 (EL) and Glu-85 contribute to the N(1)-(5-phospho-beta-D-ribosyl)glycinamide site. ATP contacts are provided by residues Arg-118, Lys-159, 164–169 (SSGKGQ), 199–202 (EGFI), and Glu-207. The 196-residue stretch at 123-318 (RLAAEELGLP…EFELHARAIL (196 aa)) folds into the ATP-grasp domain. Residues Glu-277 and Glu-289 each contribute to the Mg(2+) site. Residues Asp-296, Lys-365, and 372–373 (RR) each bind N(1)-(5-phospho-beta-D-ribosyl)glycinamide.

This sequence belongs to the PurK/PurT family. As to quaternary structure, homodimer.

The enzyme catalyses N(1)-(5-phospho-beta-D-ribosyl)glycinamide + formate + ATP = N(2)-formyl-N(1)-(5-phospho-beta-D-ribosyl)glycinamide + ADP + phosphate + H(+). It functions in the pathway purine metabolism; IMP biosynthesis via de novo pathway; N(2)-formyl-N(1)-(5-phospho-D-ribosyl)glycinamide from N(1)-(5-phospho-D-ribosyl)glycinamide (formate route): step 1/1. Its function is as follows. Involved in the de novo purine biosynthesis. Catalyzes the transfer of formate to 5-phospho-ribosyl-glycinamide (GAR), producing 5-phospho-ribosyl-N-formylglycinamide (FGAR). Formate is provided by PurU via hydrolysis of 10-formyl-tetrahydrofolate. The polypeptide is Formate-dependent phosphoribosylglycinamide formyltransferase (Burkholderia lata (strain ATCC 17760 / DSM 23089 / LMG 22485 / NCIMB 9086 / R18194 / 383)).